Consider the following 66-residue polypeptide: Protein translocase subunit SecE (66 aa).

A helical transmembrane segment spans residues 29–49 (LIASTLVVVAAVFIFSLICLV).

It belongs to the SecE/SEC61-gamma family. In terms of assembly, component of the Sec protein translocase complex. Heterotrimer consisting of SecY, SecE and SecG subunits. The heterotrimers can form oligomers, although 1 heterotrimer is thought to be able to translocate proteins. Interacts with the ribosome. Interacts with SecDF, and other proteins may be involved. Interacts with SecA.

It localises to the cell inner membrane. Functionally, essential subunit of the Sec protein translocation channel SecYEG. Clamps together the 2 halves of SecY. May contact the channel plug during translocation. The chain is Protein translocase subunit SecE from Rickettsia typhi (strain ATCC VR-144 / Wilmington).